Reading from the N-terminus, the 152-residue chain is Xanthine-guanine phosphoribosyltransferase (152 aa).

5-phospho-alpha-D-ribose 1-diphosphate-binding positions include 37–38 (RG), R69, and 88–96 (DDLVDTGGT). R69 provides a ligand contact to GMP. D89 is a binding site for Mg(2+). Positions 92 and 135 each coordinate guanine. 2 residues coordinate xanthine: D92 and I135. GMP-binding positions include 92–96 (DTGGT) and 134–135 (WI).

It belongs to the purine/pyrimidine phosphoribosyltransferase family. XGPT subfamily. As to quaternary structure, homotetramer. Mg(2+) serves as cofactor.

The protein localises to the cell inner membrane. The enzyme catalyses GMP + diphosphate = guanine + 5-phospho-alpha-D-ribose 1-diphosphate. The catalysed reaction is XMP + diphosphate = xanthine + 5-phospho-alpha-D-ribose 1-diphosphate. It carries out the reaction IMP + diphosphate = hypoxanthine + 5-phospho-alpha-D-ribose 1-diphosphate. It functions in the pathway purine metabolism; GMP biosynthesis via salvage pathway; GMP from guanine: step 1/1. It participates in purine metabolism; XMP biosynthesis via salvage pathway; XMP from xanthine: step 1/1. Functionally, purine salvage pathway enzyme that catalyzes the transfer of the ribosyl-5-phosphate group from 5-phospho-alpha-D-ribose 1-diphosphate (PRPP) to the N9 position of the 6-oxopurines guanine and xanthine to form the corresponding ribonucleotides GMP (guanosine 5'-monophosphate) and XMP (xanthosine 5'-monophosphate), with the release of PPi. To a lesser extent, also acts on hypoxanthine. The chain is Xanthine-guanine phosphoribosyltransferase from Shigella boydii serotype 4 (strain Sb227).